Here is a 129-residue protein sequence, read N- to C-terminus: CD59B glycoprotein (129 aa).

An N-terminal signal peptide occupies residues 1–23; that stretch reads MRAQRGLILLLLLLAVFCSTAVS. The 84-residue stretch at 24-107 folds into the UPAR/Ly6 domain; it reads LKCYNCLDPV…GLEEPNNAET (84 aa). Disulfide bonds link Cys26–Cys49, Cys29–Cys36, Cys42–Cys62, Cys68–Cys86, and Cys87–Cys92. A glycan (N-linked (GlcNAc...) asparagine) is linked at Asn39. The GPI-anchor amidated asparagine moiety is linked to residue Asn104. Residues 105–129 constitute a propeptide, removed in mature form; sequence AETSSLRKTALLGTSVLVAILKFCF.

In terms of assembly, interacts with T-cell surface antigen CD2. Post-translationally, N- and O-glycosylated. In terms of tissue distribution, widely expressed in the kidneys, brain, lungs, spleen and testis Testis-specific.

It localises to the cell membrane. The protein localises to the secreted. Potent inhibitor of the complement membrane attack complex (MAC) action, which protects self-cells from damage during complement activation. Acts by binding to the beta-haipins of C8 (C8A and C8B) components of the assembling MAC, forming an intermolecular beta-sheet that prevents incorporation of the multiple copies of C9 required for complete formation of the osmolytic pore. The sequence is that of CD59B glycoprotein from Mus musculus (Mouse).